We begin with the raw amino-acid sequence, 302 residues long: Rab effector Noc2 (302 aa).

The region spanning 41–158 is the RabBD domain; sequence QRRTQCLSPG…KRSGAWFYKG (118 aa). The segment at 89 to 146 adopts an FYVE-type zinc-finger fold; that stretch reads GNGVSQCLLCGEMLGFLGSSSVFCKDCRKKVCTKCGIEASPGQKRPLWLCKICSEQRE. Zn(2+)-binding residues include C95, C98, C112, C115, C120, C123, C138, and C141. Disordered stretches follow at residues 174–194 and 206–302; these read DPHF…SAEV and VSSD…TTHY. Position 248 is a phosphoserine (S248). Residues 258-269 show a composition bias toward low complexity; that stretch reads SHLSGSQSSLGS.

Recruited to dense-core vesicles through specific interaction with RAB27A in endocrine cells. Interacts with RAB3A, RAB3B, RAB3C and RAB3D. Interacts with ZYX. In terms of tissue distribution, highly expressed in pancreatic islets and parotid. High to moderate expression in adrenal gland, pituitary gland and ovary.

It localises to the cytoplasm. The protein resides in the cytoplasmic vesicle. Its subcellular location is the secretory vesicle membrane. Functionally, rab GTPase effector involved in the late steps of regulated exocytosis, both in endocrine and exocrine cells. Regulates the exocytosis of dense-core vesicles in neuroendocrine cells through interaction with RAB27A. Acts as a potential RAB3B effector protein in epithelial cells. The chain is Rab effector Noc2 (Rph3al) from Rattus norvegicus (Rat).